A 540-amino-acid polypeptide reads, in one-letter code: ATP-dependent RNA helicase DBP3 (540 aa).

A compositionally biased stretch (basic and acidic residues) spans 1–35; sequence MTVEESKKRKLTDDVAIKQNEKKIKKDKKVKDKKD. A disordered region spans residues 1 to 89; that stretch reads MTVEESKKRK…TTEQPSKQVK (89 aa). Basic residues predominate over residues 36-52; it reads KKDKKDKKDKKEKKEKK. 2 stretches are compositionally biased toward basic and acidic residues: residues 53-62 and 68-79; these read EKKEKNDKKD and DKKAEQVDKLSE. The short motif at 130–156 is the Q motif element; it reads LAFNQISLDKEVQNEIAKFPKPTPIQA. In terms of domain architecture, Helicase ATP-binding spans 159-332; sequence WPYLLSGKDV…STFMKEPVKV (174 aa). ATP is bound at residue 172-179; the sequence is AETGSGKT. Positions 279-282 match the DEAD box motif; it reads DEAD. A Helicase C-terminal domain is found at 361-510; sequence KLLDLLKKYQ…PVPEDLIKFG (150 aa).

This sequence belongs to the DEAD box helicase family. DDX5/DBP2 subfamily.

The protein resides in the nucleus. The protein localises to the nucleolus. The enzyme catalyses ATP + H2O = ADP + phosphate + H(+). Functionally, ATP-dependent RNA helicase required for 60S ribosomal subunit synthesis. Involved in efficient pre-rRNA processing, predominantly at site A3, which is necessary for the normal formation of 25S and 5.8S rRNAs. In Candida glabrata (strain ATCC 2001 / BCRC 20586 / JCM 3761 / NBRC 0622 / NRRL Y-65 / CBS 138) (Yeast), this protein is ATP-dependent RNA helicase DBP3 (DBP3).